Reading from the N-terminus, the 178-residue chain is MSRIGKKTIVIPAGVTVTLNGSTATVKGPKGELVKEFNPEITINIEGNEINVSRPTDNKNHRALHGTTRAILNNMVVGVSEGYEKKLELIGVGYRAQKQGDKLVLNVGYSHPVEFVAPKGVEIEVPANTQVIVKGYNKEHVGELAANIRAVRPPEPYKGKGIRYEGEHVRRKEGKTGK.

The protein belongs to the universal ribosomal protein uL6 family. In terms of assembly, part of the 50S ribosomal subunit.

Its function is as follows. This protein binds to the 23S rRNA, and is important in its secondary structure. It is located near the subunit interface in the base of the L7/L12 stalk, and near the tRNA binding site of the peptidyltransferase center. The protein is Large ribosomal subunit protein uL6 of Listeria innocua serovar 6a (strain ATCC BAA-680 / CLIP 11262).